A 340-amino-acid polypeptide reads, in one-letter code: MEF2 transcription factor homolog (340 aa).

In terms of domain architecture, MADS-box spans 1 to 61; the sequence is MGRKKIQITR…NKLFQYASTD (61 aa). 4 disordered regions span residues 90 to 112, 193 to 217, 258 to 283, and 312 to 340; these read RKEG…TSPV, NQRN…LDFP, LQQR…NGTS, and PNTY…QQLT. The span at 200–211 shows a compositional bias: low complexity; sequence SSTSVAPSSSSS. Over residues 258-268 the composition is skewed to polar residues; sequence LQQRPVSQPAP. The segment covering 269-283 has biased composition (low complexity); that stretch reads SISNSSTNGISNGTS. The span at 318-332 shows a compositional bias: basic and acidic residues; that stretch reads MEPHSPPEKRPRITT.

The protein belongs to the MEF2 family. In terms of assembly, interacts with histone deacetylase hda-4 isoform b.

It localises to the nucleus. In terms of biological role, transcription regulator. Binds specifically to the MEF2 element, 5'-[TC]TA[AT][AT][AT][AT]TA[AG]-3' in the regulatory elements of target genes, such as chemoreceptors str-1 and srh-234. Involved in transduction of sensory signals, together with egl-4, kin-29 and hda-4; binding to histone deacetylase hda-4 enables negative modulation of chemoreceptor gene expression in chemosensory neurons. In response to starvation, negatively modulates expression of chemoreceptor srh-234 in ADL sensory neurons, acting in concert with basic helix-loop-helix (bHLH) transcription factors. Plays a role in regulating muscle sensitivity to acetylcholine (ACh) and the magnitude of presynaptic ACh release via a retrograde signal, perhaps by indirectly decreasing Ras-related protein Rab-3 activity. This chain is MEF2 transcription factor homolog, found in Caenorhabditis elegans.